A 181-amino-acid polypeptide reads, in one-letter code: Photosystem I assembly protein Ycf4 (181 aa).

2 consecutive transmembrane segments (helical) span residues 19-41 and 61-83; these read YFWA…SSYF and LVMS…TLFW.

It belongs to the Ycf4 family.

The protein localises to the plastid. Its subcellular location is the chloroplast thylakoid membrane. In terms of biological role, seems to be required for the assembly of the photosystem I complex. This Trieres chinensis (Marine centric diatom) protein is Photosystem I assembly protein Ycf4.